Reading from the N-terminus, the 245-residue chain is 1-(5-phosphoribosyl)-5-[(5-phosphoribosylamino)methylideneamino] imidazole-4-carboxamide isomerase (245 aa).

The active-site Proton acceptor is the Asp-8. Asp-130 serves as the catalytic Proton donor.

The protein belongs to the HisA/HisF family.

Its subcellular location is the cytoplasm. The catalysed reaction is 1-(5-phospho-beta-D-ribosyl)-5-[(5-phospho-beta-D-ribosylamino)methylideneamino]imidazole-4-carboxamide = 5-[(5-phospho-1-deoxy-D-ribulos-1-ylimino)methylamino]-1-(5-phospho-beta-D-ribosyl)imidazole-4-carboxamide. The protein operates within amino-acid biosynthesis; L-histidine biosynthesis; L-histidine from 5-phospho-alpha-D-ribose 1-diphosphate: step 4/9. This Pseudomonas putida (strain ATCC 47054 / DSM 6125 / CFBP 8728 / NCIMB 11950 / KT2440) protein is 1-(5-phosphoribosyl)-5-[(5-phosphoribosylamino)methylideneamino] imidazole-4-carboxamide isomerase.